The following is a 284-amino-acid chain: MGKIMEWAARSDHLGGIPRNTVIMAVSAFAKAVANLCNKSSVHNADTLMNLVQSRPPGVPLITVSNHMSTLDDPVMWGAFKGLLSLDPELARWVLAAEDICFRNPIFSYIFRTGKCIPITRGGGIYQENMNEALQRLKDGSWLHTFPEGKVFQDDVPIRRLKWGTASLIARSPVTPIVLPIIHRGFEEMMPENYNNGRRPLVPLPNKHLKVVVGEPIEFDVPMMVETAVLDSRHVTPPLQEVKWPVLTSAGQVLDETAQRHLYIALSEKIQSSLETLRLLAKRL.

The helical transmembrane segment at 21–37 (TVIMAVSAFAKAVANLC) threads the bilayer. Positions 67-72 (HMSTLD) match the HXXXXD motif motif. Residues 122-163 (GGGIYQENMNEALQRLKDGSWLHTFPEGKVFQDDVPIRRLKW) form a hydrophilic region.

This sequence belongs to the taffazin family. Essentially present in young tissues. Expressed in roots, cotyledons, leaves, and shoot and root apical meristems.

Its subcellular location is the cell membrane. Functionally, acyltransferase that catalyzes the N-acylation of phosphatidylethanolamine to form N-acylphosphatidylethanolamine (N-acyl-PE) (e.g. NAPEs containing C16:0, C16:1, C18:0, and C18:1). Also mediates the formation of acylphosphatidylglycerol (acyl-PG) from lysoglycerophospholipid by O-acylation. Uses acyl-CoA as acyl donors. Acylates 1-acyllysophosphatidylethanolamine (1-acyllyso-PE) and 1-acyllysophosphatidylglycerol (1-acyllyso-PG) at the sn-2-position. This chain is N-acylphosphatidylethanolamine synthase, found in Arabidopsis thaliana (Mouse-ear cress).